The chain runs to 1320 residues: Probable inactive ATP-dependent zinc metalloprotease FTSHI 5, chloroplastic (1320 aa).

Residues 1 to 43 (MDFISASSLSSPFSTQLSPIYLSSGIVSLKPRHRVKNRNFGSR) constitute a chloroplast transit peptide. Helical transmembrane passes span 571–591 (LYLK…WIPM), 633–653 (NIND…IIPY), and 695–715 (FQWF…LYHV). ATP is bound at residue 824 to 831 (GERGTGKT).

The protein in the N-terminal section; belongs to the AAA ATPase family. This sequence in the C-terminal section; belongs to the peptidase M41 family. Oligomer.

It localises to the plastid. The protein resides in the chloroplast membrane. Required for plastid development during embryogenesis. Might be involved in chaperone functions or play a structural role in the thylakoid FtsH complex. The polypeptide is Probable inactive ATP-dependent zinc metalloprotease FTSHI 5, chloroplastic (Arabidopsis thaliana (Mouse-ear cress)).